The primary structure comprises 407 residues: MRLLSVLVFLISVISIAKADYQYAFCKFNELSIGGVEGIAHLLSTDGTTLNITFDFTTSYAQNTQFAAQILTYGYNPSSMTNLGSVFDPTNVKTAGCPSGTPRAGDIGNIQANGGNVEAQTISLNIPNIKDDANSIIGRSIAIYGGSYDCSDPSKSVIGDMISFCTIGVGNIDYSSFDKSKLTGVNTASSYSNLENAIGLAVVYNTTITKGDYIEGRVLFKALNSSFIQVSAKVSGLSYQAHGFHVHQFGDVSSDNGTSIGGHFLKTGQEHSLPPSGTRHYGDFGNFCAFSQDMMDTGYYYYETDHVTAALVIGRGMAVHNFTDKGNSDVGGSRCGQGVIALIQDADYSLNLPMDWKWDVICANGSYYGDMSTSMNSESYNDNEPGSSSTVIPFFALIIFSIIFALL.

The signal sequence occupies residues methionine 1 to alanine 19. The Extracellular segment spans residues aspartate 20–glycine 386. N-linked (GlcNAc...) asparagine glycans are attached at residues asparagine 51, asparagine 205, and asparagine 224. The Cu cation site is built by histidine 245 and histidine 247. Asparagine 256 carries an N-linked (GlcNAc...) asparagine glycan. Histidine 263 is a Cu cation binding site. Positions 263, 271, 280, and 283 each coordinate Zn(2+). Residue histidine 320 participates in Cu cation binding. N-linked (GlcNAc...) asparagine glycans are attached at residues asparagine 321 and asparagine 364. The chain crosses the membrane as a helical span at residues serine 387–leucine 406. A topological domain (cytoplasmic) is located at residue leucine 407.

Belongs to the Cu-Zn superoxide dismutase family. The cofactor is Cu cation. Zn(2+) is required as a cofactor.

It is found in the cell membrane. It carries out the reaction 2 superoxide + 2 H(+) = H2O2 + O2. In terms of biological role, protect the extracellular space from toxic effect of reactive oxygen intermediates by converting superoxyde radicals into hydrogen peroxyde and oxygen. The chain is Extracellular superoxide dismutase [Cu-Zn] 3 (sodC) from Dictyostelium discoideum (Social amoeba).